The sequence spans 397 residues: S-adenosylmethionine synthase (397 aa).

His-16 serves as a coordination point for ATP. Residue Asp-18 participates in Mg(2+) binding. Residue Glu-44 participates in K(+) binding. L-methionine contacts are provided by Glu-57 and Gln-100. The segment at 100–110 (QSPDIAQGVNE) is flexible loop. Residues 175-177 (DAK), 242-243 (RF), Asp-251, 257-258 (RK), Ala-274, and Lys-278 contribute to the ATP site. An L-methionine-binding site is contributed by Asp-251. Lys-282 serves as a coordination point for L-methionine.

Belongs to the AdoMet synthase family. As to quaternary structure, homotetramer; dimer of dimers. It depends on Mg(2+) as a cofactor. Requires K(+) as cofactor.

It is found in the cytoplasm. It carries out the reaction L-methionine + ATP + H2O = S-adenosyl-L-methionine + phosphate + diphosphate. Its pathway is amino-acid biosynthesis; S-adenosyl-L-methionine biosynthesis; S-adenosyl-L-methionine from L-methionine: step 1/1. Its function is as follows. Catalyzes the formation of S-adenosylmethionine (AdoMet) from methionine and ATP. The overall synthetic reaction is composed of two sequential steps, AdoMet formation and the subsequent tripolyphosphate hydrolysis which occurs prior to release of AdoMet from the enzyme. The polypeptide is S-adenosylmethionine synthase (Streptococcus thermophilus (strain CNRZ 1066)).